A 293-amino-acid polypeptide reads, in one-letter code: tRNA (guanine(9)-N1)-methyltransferase (293 aa).

A disordered region spans residues 1-31 (MSNDEINQNEEKVKRTPPLPPVPEGMSKKQW). Threonine 16 carries the post-translational modification Phosphothreonine. A coiled-coil region spans residues 32 to 61 (KKMCKRQRWEENKAKYNAERRVKKKRLRHE). The SAM-dependent MTase TRM10-type domain maps to 83–279 (EPRINVNQTD…SVLPPRKLDA (197 aa)). Residues 186-187 (LT), glycine 206, 210-214 (DKNRY), cysteine 218, leucine 232, and 244-246 (RVL) each bind S-adenosyl-L-methionine. Aspartate 210 functions as the Proton acceptor in the catalytic mechanism. Residue serine 283 is modified to Phosphoserine.

It belongs to the class IV-like SAM-binding methyltransferase superfamily. TRM10 family. As to quaternary structure, monomer.

Its subcellular location is the cytoplasm. The protein localises to the nucleus. It catalyses the reaction guanosine(9) in tRNA + S-adenosyl-L-methionine = N(1)-methylguanosine(9) in tRNA + S-adenosyl-L-homocysteine + H(+). Functionally, S-adenosyl-L-methionine-dependent guanine N(1)-methyltransferase that catalyzes the formation of N(1)-methylguanine at position 9 (m1G9) in cytoplasmic tRNAs. This chain is tRNA (guanine(9)-N1)-methyltransferase, found in Saccharomyces cerevisiae (strain ATCC 204508 / S288c) (Baker's yeast).